The primary structure comprises 984 residues: Translation initiation factor IF-2 (984 aa).

A disordered region spans residues 32 to 402; the sequence is PAKNATSTLT…TQPQRAAKRK (371 aa). Residues 89 to 123 show a composition bias toward low complexity; the sequence is PAETEAQASPAQPEAKAAAPAAEAEEAPAAKPAPA. Over residues 126 to 136 the composition is skewed to basic and acidic residues; sequence RKAEARTEAPR. 2 stretches are compositionally biased toward low complexity: residues 154 to 172 and 187 to 197; these read APET…SAAP and AETTESAPAEP. The span at 198–220 shows a compositional bias: basic and acidic residues; the sequence is AAEKAPAEKRRYEVSMEPEKDSV. Over residues 255–270 the composition is skewed to low complexity; the sequence is RPDPAAVQAQAAAAAQ. Residues 271 to 283 are compositionally biased toward basic and acidic residues; the sequence is AREERAERPDRGP. Low complexity predominate over residues 308–334; that stretch reads GRPAPRSGAPRPGGARPAAGFGQPAQA. In terms of domain architecture, tr-type G spans 482-651; the sequence is PRPPVVTIMG…ALQAEVLELK (170 aa). The interval 491–498 is G1; it reads GHVDHGKT. 491–498 provides a ligand contact to GTP; it reads GHVDHGKT. The tract at residues 516–520 is G2; sequence GITQH. The segment at 537–540 is G3; the sequence is DTPG. Residues 537–541 and 591–594 contribute to the GTP site; these read DTPGH and NKID. The segment at 591-594 is G4; it reads NKID. Residues 627–629 form a G5 region; it reads SAK.

This sequence belongs to the TRAFAC class translation factor GTPase superfamily. Classic translation factor GTPase family. IF-2 subfamily.

The protein resides in the cytoplasm. In terms of biological role, one of the essential components for the initiation of protein synthesis. Protects formylmethionyl-tRNA from spontaneous hydrolysis and promotes its binding to the 30S ribosomal subunits. Also involved in the hydrolysis of GTP during the formation of the 70S ribosomal complex. This is Translation initiation factor IF-2 from Oleidesulfovibrio alaskensis (strain ATCC BAA-1058 / DSM 17464 / G20) (Desulfovibrio alaskensis).